Here is a 210-residue protein sequence, read N- to C-terminus: HTH-type transcriptional repressor FabR (210 aa).

One can recognise an HTH tetR-type domain in the interval 10–70; it reads KTRRSLVEAA…TMVDESGLML (61 aa). A DNA-binding region (H-T-H motif) is located at residues 33-52; it reads SLREVAREAGIAPTSFYRHF.

As to quaternary structure, homodimer.

It localises to the cytoplasm. In terms of biological role, represses the transcription of fabB, involved in unsaturated fatty acid (UFA) biosynthesis. By controlling UFA production, FabR directly influences the physical properties of the membrane bilayer. The polypeptide is HTH-type transcriptional repressor FabR (Salmonella choleraesuis (strain SC-B67)).